Reading from the N-terminus, the 263-residue chain is 3-methyl-2-oxobutanoate hydroxymethyltransferase (263 aa).

The Mg(2+) site is built by D43 and D82. 3-methyl-2-oxobutanoate is bound by residues 43-44, D82, and K111; that span reads DS. E113 provides a ligand contact to Mg(2+). The Proton acceptor role is filled by E179.

It belongs to the PanB family. As to quaternary structure, homodecamer; pentamer of dimers. Mg(2+) is required as a cofactor.

The protein localises to the cytoplasm. It carries out the reaction 3-methyl-2-oxobutanoate + (6R)-5,10-methylene-5,6,7,8-tetrahydrofolate + H2O = 2-dehydropantoate + (6S)-5,6,7,8-tetrahydrofolate. It participates in cofactor biosynthesis; (R)-pantothenate biosynthesis; (R)-pantoate from 3-methyl-2-oxobutanoate: step 1/2. Its function is as follows. Catalyzes the reversible reaction in which hydroxymethyl group from 5,10-methylenetetrahydrofolate is transferred onto alpha-ketoisovalerate to form ketopantoate. This Neisseria meningitidis serogroup A / serotype 4A (strain DSM 15465 / Z2491) protein is 3-methyl-2-oxobutanoate hydroxymethyltransferase.